Consider the following 252-residue polypeptide: Ubiquinone biosynthesis O-methyltransferase (252 aa).

R51, G70, D91, and M136 together coordinate S-adenosyl-L-methionine.

Belongs to the methyltransferase superfamily. UbiG/COQ3 family.

It carries out the reaction a 3-demethylubiquinol + S-adenosyl-L-methionine = a ubiquinol + S-adenosyl-L-homocysteine + H(+). It catalyses the reaction a 3-(all-trans-polyprenyl)benzene-1,2-diol + S-adenosyl-L-methionine = a 2-methoxy-6-(all-trans-polyprenyl)phenol + S-adenosyl-L-homocysteine + H(+). Its pathway is cofactor biosynthesis; ubiquinone biosynthesis. Functionally, O-methyltransferase that catalyzes the 2 O-methylation steps in the ubiquinone biosynthetic pathway. This Albidiferax ferrireducens (strain ATCC BAA-621 / DSM 15236 / T118) (Rhodoferax ferrireducens) protein is Ubiquinone biosynthesis O-methyltransferase.